The sequence spans 411 residues: Imidazolonepropionase (411 aa).

Positions 78 and 80 each coordinate Fe(3+). Zn(2+)-binding residues include H78 and H80. The 4-imidazolone-5-propanoate site is built by R87, Y150, and H183. Residue Y150 coordinates N-formimidoyl-L-glutamate. Position 248 (H248) interacts with Fe(3+). Residue H248 coordinates Zn(2+). Residue Q251 participates in 4-imidazolone-5-propanoate binding. D322 contacts Fe(3+). D322 is a binding site for Zn(2+). N324 and G326 together coordinate N-formimidoyl-L-glutamate. S327 provides a ligand contact to 4-imidazolone-5-propanoate.

Belongs to the metallo-dependent hydrolases superfamily. HutI family. Requires Zn(2+) as cofactor. It depends on Fe(3+) as a cofactor.

Its subcellular location is the cytoplasm. It carries out the reaction 4-imidazolone-5-propanoate + H2O = N-formimidoyl-L-glutamate. Its pathway is amino-acid degradation; L-histidine degradation into L-glutamate; N-formimidoyl-L-glutamate from L-histidine: step 3/3. Catalyzes the hydrolytic cleavage of the carbon-nitrogen bond in imidazolone-5-propanoate to yield N-formimidoyl-L-glutamate. It is the third step in the universal histidine degradation pathway. In Christiangramia forsetii (strain DSM 17595 / CGMCC 1.15422 / KT0803) (Gramella forsetii), this protein is Imidazolonepropionase.